The chain runs to 123 residues: ATP synthase epsilon chain (123 aa).

This sequence belongs to the ATPase epsilon chain family. As to quaternary structure, F-type ATPases have 2 components, CF(1) - the catalytic core - and CF(0) - the membrane proton channel. CF(1) has five subunits: alpha(3), beta(3), gamma(1), delta(1), epsilon(1). CF(0) has three main subunits: a, b and c.

The protein localises to the cell inner membrane. Its function is as follows. Produces ATP from ADP in the presence of a proton gradient across the membrane. In Helicobacter pylori (strain G27), this protein is ATP synthase epsilon chain.